Here is a 729-residue protein sequence, read N- to C-terminus: Phosphoribosylformylglycinamidine synthase subunit PurL (729 aa).

The active site involves histidine 54. Positions 57 and 96 each coordinate ATP. Mg(2+) is bound at residue glutamate 98. Substrate-binding positions include 99 to 102 (SHNH) and arginine 121. Histidine 100 (proton acceptor) is an active-site residue. Aspartate 122 provides a ligand contact to Mg(2+). Substrate is bound at residue glutamine 245. Mg(2+) is bound at residue aspartate 273. Substrate is bound at residue 317-319 (ETQ). 2 residues coordinate ATP: aspartate 495 and glycine 532. Asparagine 533 is a binding site for Mg(2+). Serine 535 is a substrate binding site.

This sequence belongs to the FGAMS family. In terms of assembly, monomer. Part of the FGAM synthase complex composed of 1 PurL, 1 PurQ and 2 PurS subunits.

It localises to the cytoplasm. The enzyme catalyses N(2)-formyl-N(1)-(5-phospho-beta-D-ribosyl)glycinamide + L-glutamine + ATP + H2O = 2-formamido-N(1)-(5-O-phospho-beta-D-ribosyl)acetamidine + L-glutamate + ADP + phosphate + H(+). It participates in purine metabolism; IMP biosynthesis via de novo pathway; 5-amino-1-(5-phospho-D-ribosyl)imidazole from N(2)-formyl-N(1)-(5-phospho-D-ribosyl)glycinamide: step 1/2. In terms of biological role, part of the phosphoribosylformylglycinamidine synthase complex involved in the purines biosynthetic pathway. Catalyzes the ATP-dependent conversion of formylglycinamide ribonucleotide (FGAR) and glutamine to yield formylglycinamidine ribonucleotide (FGAM) and glutamate. The FGAM synthase complex is composed of three subunits. PurQ produces an ammonia molecule by converting glutamine to glutamate. PurL transfers the ammonia molecule to FGAR to form FGAM in an ATP-dependent manner. PurS interacts with PurQ and PurL and is thought to assist in the transfer of the ammonia molecule from PurQ to PurL. The chain is Phosphoribosylformylglycinamidine synthase subunit PurL from Staphylococcus haemolyticus (strain JCSC1435).